Reading from the N-terminus, the 176-residue chain is Cytochrome b (176 aa).

The next 3 helical transmembrane spans lie at 33–53 (FGSLLGICLALQILTGLFLAM), 77–98 (WILRYLHANGASMFFICLYLHV), and 113–133 (WNIGVTPLFAVMATAFMGYVL). Positions 83 and 97 each coordinate heme b.

The protein belongs to the cytochrome b family. The cytochrome bc1 complex contains 11 subunits: 3 respiratory subunits (MT-CYB, CYC1 and UQCRFS1), 2 core proteins (UQCRC1 and UQCRC2) and 6 low-molecular weight proteins (UQCRH/QCR6, UQCRB/QCR7, UQCRQ/QCR8, UQCR10/QCR9, UQCR11/QCR10 and a cleavage product of UQCRFS1). This cytochrome bc1 complex then forms a dimer. It depends on heme b as a cofactor.

It localises to the mitochondrion inner membrane. In terms of biological role, component of the ubiquinol-cytochrome c reductase complex (complex III or cytochrome b-c1 complex) that is part of the mitochondrial respiratory chain. The b-c1 complex mediates electron transfer from ubiquinol to cytochrome c. Contributes to the generation of a proton gradient across the mitochondrial membrane that is then used for ATP synthesis. The protein is Cytochrome b (MT-CYB) of Myotis leibii (Eastern small-footed myotis).